A 68-amino-acid polypeptide reads, in one-letter code: Protein transport protein Sec61 gamma-2 subunit (68 aa).

Residues 1 to 32 (MDKVVKFAEPGRAFAKDSIRLVKRCTKPDRKE) are Cytoplasmic-facing. A helical transmembrane segment spans residues 33 to 61 (FQKIAIATAVGFCIMGFIGFFVKLIHIPI). Residues 62–68 (NNIIVGS) are Extracellular-facing.

The protein belongs to the SecE/SEC61-gamma family. Heterotrimeric complex composed of SEC61-alpha, SEC61-beta and SEC61-gamma.

Its subcellular location is the endoplasmic reticulum membrane. Necessary for protein translocation in the endoplasmic reticulum. This Drosophila melanogaster (Fruit fly) protein is Protein transport protein Sec61 gamma-2 subunit (Sec61gamma).